Here is a 548-residue protein sequence, read N- to C-terminus: Luciferin 4-monooxygenase (548 aa).

A Microbody targeting signal motif is present at residues 546–548; it reads AKM.

The protein belongs to the ATP-dependent AMP-binding enzyme family. As to quaternary structure, homodimer. The cofactor is Mg(2+).

The protein resides in the peroxisome. It catalyses the reaction firefly D-luciferin + ATP + O2 = firefly oxyluciferin + hnu + AMP + CO2 + diphosphate. Inhibited by ATP analogs and sodium deoxycholate. Activated by choline-containing phospholipids. In terms of biological role, produces green light with a wavelength of 570 nm. This is Luciferin 4-monooxygenase from Luciola mingrelica (Southern Russian firefly).